The sequence spans 136 residues: uncharacterized protein (136 aa).

A disordered region spans residues Met-1–Arg-51. Over residues Gln-37 to Ser-46 the composition is skewed to basic and acidic residues.

This is an uncharacterized protein from Homo sapiens (Human).